We begin with the raw amino-acid sequence, 1394 residues long: DNA-directed RNA polymerase subunit beta'' (1394 aa).

Residues Cys-224, Cys-295, Cys-302, and Cys-305 each contribute to the Zn(2+) site.

Belongs to the RNA polymerase beta' chain family. RpoC2 subfamily. In terms of assembly, in plastids the minimal PEP RNA polymerase catalytic core is composed of four subunits: alpha, beta, beta', and beta''. When a (nuclear-encoded) sigma factor is associated with the core the holoenzyme is formed, which can initiate transcription. Zn(2+) serves as cofactor.

The protein resides in the plastid. It localises to the chloroplast. The catalysed reaction is RNA(n) + a ribonucleoside 5'-triphosphate = RNA(n+1) + diphosphate. DNA-dependent RNA polymerase catalyzes the transcription of DNA into RNA using the four ribonucleoside triphosphates as substrates. The chain is DNA-directed RNA polymerase subunit beta'' from Vitis vinifera (Grape).